Reading from the N-terminus, the 227-residue chain is Fibrillarin-like rRNA/tRNA 2'-O-methyltransferase (227 aa).

S-adenosyl-L-methionine-binding positions include threonine 86–threonine 87, glutamate 105–phenylalanine 106, aspartate 130–alanine 131, and aspartate 150–glutamine 153.

This sequence belongs to the methyltransferase superfamily. Fibrillarin family. Interacts with nop5. Component of box C/D small ribonucleoprotein (sRNP) particles that contain rpl7ae, FlpA and nop5, plus a guide RNA. These sRNP particles form homodimers, giving rise to an asymmetric holoenzyme.

Its function is as follows. Involved in pre-rRNA and tRNA processing. Utilizes the methyl donor S-adenosyl-L-methionine to catalyze the site-specific 2'-hydroxyl methylation of ribose moieties in rRNA and tRNA. Site specificity is provided by a guide RNA that base pairs with the substrate. Methylation occurs at a characteristic distance from the sequence involved in base pairing with the guide RNA. In Pyrococcus furiosus (strain ATCC 43587 / DSM 3638 / JCM 8422 / Vc1), this protein is Fibrillarin-like rRNA/tRNA 2'-O-methyltransferase.